We begin with the raw amino-acid sequence, 294 residues long: Mitochondrial substrate carrier family protein ucpB (294 aa).

Residues 1-10 (MTSQESIGIK) are Mitochondrial intermembrane-facing. 3 Solcar repeats span residues 9 to 93 (IKFL…IKNY), 101 to 187 (TNLL…IKHM), and 197 to 288 (DGLQ…LRKV). Residues 11-31 (FLFGGLSCMGAAVVSNPVDVL) form a helical membrane-spanning segment. Residues 32-67 (KTRFQIHGEGIDSKSLGLVNGTIKIIKNEGISAMYK) lie on the Mitochondrial matrix side of the membrane. Residues 68-88 (GLTPSLLREATYSTLRMGGYD) form a helical membrane-spanning segment. The Mitochondrial intermembrane portion of the chain corresponds to 89–106 (VIKNYFIDSNGKTNLLSK). Residues 107–127 (VTSGALSGALGACITSPTDLI) traverse the membrane as a helical segment. Residues 128–161 (KVRMQASSKGVKYDSISSAFKEIIAKEGIKGLWK) are Mitochondrial matrix-facing. Residues 162–182 (GVGPTTQRAALLTASQIPSYD) form a helical membrane-spanning segment. The Mitochondrial intermembrane segment spans residues 183 to 192 (HIKHMILDHG). A helical membrane pass occupies residues 193 to 213 (IIQVDGLQVHIVSSIFAGLIA). Over 214–267 (SITTSPVDLVKTRIMNQPFDSNGVGLIYKSSYDCFKKTFQSEGISGLYKGFLPN) the chain is Mitochondrial matrix. The chain crosses the membrane as a helical span at residues 268-285 (WFRIGPHTIVTFILYEYL). Topologically, residues 286–294 (RKVSGIKPI) are mitochondrial intermembrane.

It belongs to the mitochondrial carrier (TC 2.A.29) family.

The protein localises to the mitochondrion inner membrane. Its function is as follows. Mitochondrial solute carriers shuttle metabolites, nucleotides, and cofactors through the mitochondrial inner membrane. The sequence is that of Mitochondrial substrate carrier family protein ucpB (ucpB) from Dictyostelium discoideum (Social amoeba).